Consider the following 361-residue polypeptide: Phosphoserine aminotransferase (361 aa).

Arg42 contributes to the L-glutamate binding site. Residues 76–77 (AR), Trp102, Thr153, Asp173, and Gln196 contribute to the pyridoxal 5'-phosphate site. N6-(pyridoxal phosphate)lysine is present on Lys197. Residue 238–239 (NT) participates in pyridoxal 5'-phosphate binding.

The protein belongs to the class-V pyridoxal-phosphate-dependent aminotransferase family. SerC subfamily. As to quaternary structure, homodimer. It depends on pyridoxal 5'-phosphate as a cofactor.

The protein resides in the cytoplasm. It carries out the reaction O-phospho-L-serine + 2-oxoglutarate = 3-phosphooxypyruvate + L-glutamate. The enzyme catalyses 4-(phosphooxy)-L-threonine + 2-oxoglutarate = (R)-3-hydroxy-2-oxo-4-phosphooxybutanoate + L-glutamate. It participates in amino-acid biosynthesis; L-serine biosynthesis; L-serine from 3-phospho-D-glycerate: step 2/3. Its pathway is cofactor biosynthesis; pyridoxine 5'-phosphate biosynthesis; pyridoxine 5'-phosphate from D-erythrose 4-phosphate: step 3/5. Its function is as follows. Catalyzes the reversible conversion of 3-phosphohydroxypyruvate to phosphoserine and of 3-hydroxy-2-oxo-4-phosphonooxybutanoate to phosphohydroxythreonine. This Buchnera aphidicola subsp. Schizaphis graminum (strain Sg) protein is Phosphoserine aminotransferase.